The chain runs to 87 residues: Candoxin (87 aa).

An N-terminal signal peptide occupies residues Met1–Thr21. 5 cysteine pairs are disulfide-bonded: Cys24–Cys47, Cys27–Cys32, Cys40–Cys64, Cys68–Cys80, and Cys81–Cys86.

Expressed by the venom gland.

It localises to the secreted. In terms of biological role, binds and inhibits muscular and neuronal nicotinic acetylcholine receptors (nAChR). Is a reversible antagonist of muscle nAChR (alpha-1-beta-1-delta-epsilon/CHRNA1-CHRNB1-CHRND-CHRNE) (IC(50)=10 nM) and a potent and poorly reversible antagonist of the neuronal alpha-7/CHRNA7 nAChR (IC(50)=50 nM). May exhibit differential affinities for the two binding sites on the muscle nAChR. The sequence is that of Candoxin from Bungarus candidus (Malayan krait).